The sequence spans 342 residues: Dof zinc finger protein DOF4.6 (342 aa).

Positions 21–54 (NTCPKPQPQPLQPQQPPSVGGERKARPEKDQAVN) are disordered. The span at 25 to 36 (KPQPQPLQPQQP) shows a compositional bias: pro residues. Basic and acidic residues predominate over residues 41–51 (GERKARPEKDQ). Residues 53–107 (VNCPRCNSTNTKFCYYNNYSLTQPRYFCKGCRRYWTEGGSLRNIPVGGGSRKNKR) form a Dof-type zinc finger. Cys55, Cys58, Cys80, and Cys83 together coordinate Zn(2+). Residues 94-136 (RNIPVGGGSRKNKRSHSSSSDISNNHSDSTQPATKKHLSDHHH) form a disordered region. A compositionally biased stretch (low complexity) spans 110–122 (SSSSDISNNHSDS). The span at 127-136 (TKKHLSDHHH) shows a compositional bias: basic residues.

In terms of tissue distribution, accumulates in the stele.

The protein resides in the nucleus. Functionally, transcription factor that binds specifically to a 5'-AA[AG]G-3' consensus core sequence. This Arabidopsis thaliana (Mouse-ear cress) protein is Dof zinc finger protein DOF4.6.